The primary structure comprises 103 residues: Co-chaperonin GroES (103 aa).

Belongs to the GroES chaperonin family. Heptamer of 7 subunits arranged in a ring. Interacts with the chaperonin GroEL.

The protein localises to the plastid. The protein resides in the cyanelle. Its function is as follows. Together with the chaperonin GroEL, plays an essential role in assisting protein folding. The GroEL-GroES system forms a nano-cage that allows encapsulation of the non-native substrate proteins and provides a physical environment optimized to promote and accelerate protein folding. GroES binds to the apical surface of the GroEL ring, thereby capping the opening of the GroEL channel. This chain is Co-chaperonin GroES, found in Cyanophora paradoxa.